The chain runs to 1758 residues: RanBP2-like and GRIP domain-containing protein 4 (1758 aa).

S21 carries the phosphoserine modification. TPR repeat units lie at residues 60-93 (PRAHRFLGLLYELEENTEKAVECYRRSVELNPTQ) and 584-617 (QKMGSGLNSFYDQREYIGRSVHYWKKVLPLLKII). Residues 761–805 (DPLYKNGSLRNADSEIKHSTPSPTKYSLSPSKSYKYSPKTPPRWA) are disordered. Low complexity predominate over residues 779–798 (STPSPTKYSLSPSKSYKYSP). One can recognise a RanBD1 1 domain in the interval 1037 to 1173 (HFEPVVQMPE…FEECQQLLLD (137 aa)). 2 disordered regions span residues 1213 to 1249 (QTKVTEEENKGSGTGAAGASDTTIKPNPENTGPTLEW) and 1295 to 1332 (SFKSALSPSKSPAKLNQSGTSVGTDEESDVTQEEERDG). Over residues 1236–1245 (IKPNPENTGP) the composition is skewed to polar residues. A compositionally biased stretch (low complexity) spans 1295–1309 (SFKSALSPSKSPAKL). The segment covering 1318–1330 (TDEESDVTQEEER) has biased composition (acidic residues). Positions 1334-1470 (YFEPVVPLPD…FDEAKTAQEK (137 aa)) constitute a RanBD1 2 domain. Residues 1583–1594 (SETSSVAQSGSE) show a composition bias toward polar residues. The interval 1583-1621 (SETSSVAQSGSESKVEPKKCELSKNSDIEQSSDSKVKNL) is disordered. Residues 1595–1618 (SKVEPKKCELSKNSDIEQSSDSKV) are compositionally biased toward basic and acidic residues. In terms of domain architecture, GRIP spans 1703-1753 (QEESAANVEHLKNVLLQFIFLKPGSERERLLPVINTMLQLSPEEKGKLAAV).

In Homo sapiens (Human), this protein is RanBP2-like and GRIP domain-containing protein 4 (RGPD4).